The sequence spans 49 residues: Thymopoietin-1 (49 aa).

Residues 4 to 47 form the LEM-like domain; sequence LEDPSVLTKEKLKSELVANNVTLPAGEQRKDVYVELYLQHLTAL. The segment at 32-36 is biological activity; it reads RKDVY.

This sequence belongs to the thymopoietin family.

Hormone of the thymus with pleiotropic actions on prothymocytes, mature T-cells, the nicotinic acetylcholine receptor, and pituitary corticotrophs. The polypeptide is Thymopoietin-1 (Bos taurus (Bovine)).